The following is a 137-amino-acid chain: SPbeta prophage-derived uncharacterized protein YoqU (137 aa).

The chain is SPbeta prophage-derived uncharacterized protein YoqU (yoqU) from Bacillus subtilis (strain 168).